Consider the following 151-residue polypeptide: UPF0208 membrane protein YPTB2595 (151 aa).

The next 2 helical transmembrane spans lie at 46 to 66 (FGIRFMPPLAIFTLTWQIALG) and 69 to 89 (LGPAIATALFACGLPLQGLWW).

This sequence belongs to the UPF0208 family.

It is found in the cell inner membrane. This Yersinia pseudotuberculosis serotype I (strain IP32953) protein is UPF0208 membrane protein YPTB2595.